The primary structure comprises 396 residues: Unsaturated chondroitin disaccharide hydrolase (396 aa).

The active-site Nucleophile is the Asp-113. The substrate site is built by Asp-113, Asp-173, Gly-231, Thr-233, Arg-245, Trp-249, Ser-363, and Ser-366. Asp-173 (proton donor) is an active-site residue.

It belongs to the glycosyl hydrolase 88 family. Monomer.

The enzyme catalyses beta-D-4-deoxy-Delta(4)-GlcpA-(1-&gt;3)-beta-D-GalpNAc6S + H2O = N-acetyl-beta-D-galactosamine 6-sulfate + 5-dehydro-4-deoxy-D-glucuronate. Catalyzes the hydrolysis of unsaturated hyaluronate and chondroitin disaccharides. Also degrades unsaturated heparin disaccharides. Releases 4-deoxy-4,5-didehydro D-glucuronic acid or 4-deoxy-4,5-didehydro L-iduronic acid from chondroitin disaccharides, hyaluronan disaccharides and heparin disaccharides and cleaves both glycosidic (1-&gt;3) and (1-&gt;4) bonds. Prefers sulfated glycosaminoglycans compared to unsulfated glycosaminoglycans. Probably required for mammalian cells invasion through the degradation of extracellular sulfated glycosaminoglycans such as chondroitin and hyaluronan. The sequence is that of Unsaturated chondroitin disaccharide hydrolase (ugl) from Streptococcus pneumoniae (strain ATCC BAA-255 / R6).